We begin with the raw amino-acid sequence, 192 residues long: Probable nicotinate-nucleotide adenylyltransferase (192 aa).

It belongs to the NadD family.

It carries out the reaction nicotinate beta-D-ribonucleotide + ATP + H(+) = deamido-NAD(+) + diphosphate. The protein operates within cofactor biosynthesis; NAD(+) biosynthesis; deamido-NAD(+) from nicotinate D-ribonucleotide: step 1/1. Its function is as follows. Catalyzes the reversible adenylation of nicotinate mononucleotide (NaMN) to nicotinic acid adenine dinucleotide (NaAD). The protein is Probable nicotinate-nucleotide adenylyltransferase of Staphylococcus haemolyticus (strain JCSC1435).